Consider the following 213-residue polypeptide: Small ribosomal subunit protein uS5 (213 aa).

In terms of domain architecture, S5 DRBM spans 54–117; that stretch reads LKSETVDVRL…RNAKLNIIPV (64 aa).

This sequence belongs to the universal ribosomal protein uS5 family. In terms of assembly, part of the 30S ribosomal subunit. Contacts protein S4.

Functionally, with S4 and S12 plays an important role in translational accuracy. This chain is Small ribosomal subunit protein uS5, found in Hyperthermus butylicus (strain DSM 5456 / JCM 9403 / PLM1-5).